We begin with the raw amino-acid sequence, 262 residues long: Lysine 5,6-aminomutase beta subunit (262 aa).

The 143-residue stretch at Lys120–Ser262 folds into the B12-binding domain. Adenosylcob(III)alamin is bound by residues Thr130–Gly136 and His133. Lys144 carries the post-translational modification N6-(pyridoxal phosphate)lysine. Adenosylcob(III)alamin contacts are provided by residues Leu185–Gln192, Leu219–Pro223, and Phe239–Phe244.

Belongs to the KamE family. As to quaternary structure, heterotetramer of 2 alpha and 2 beta subunits. Adenosylcob(III)alamin is required as a cofactor. The cofactor is pyridoxal 5'-phosphate.

It catalyses the reaction (3S)-3,6-diaminohexanoate = (3S,5S)-3,5-diaminohexanoate. The enzyme catalyses D-lysine = (2R,5S)-2,5-diaminohexanoate. The protein operates within amino-acid metabolism; lysine degradation. With respect to regulation, rapidly inactivated in the presence of D-lysine and to a lesser extent in the absence of adenosylcobalamin (Adocbl). Activity is stable in the presence of Adocbl when D-lysine is absent. Adocbl imparts thermal stability at 37 degrees Celsius. Catalyzes the migration of the L-beta-lysine and D-lysine epsilon amino group to the delta carbon to produce 3,5-diaminohexanoate and 2,5-diaminohexanoate, respectively. The polypeptide is Lysine 5,6-aminomutase beta subunit (kamE) (Acetoanaerobium sticklandii (strain ATCC 12662 / DSM 519 / JCM 1433 / CCUG 9281 / NCIMB 10654 / HF) (Clostridium sticklandii)).